The following is a 394-amino-acid chain: MAVAFNRDKPHCNIGTIGHVDHGKTSLATAITIVSSELSDGAVKVKNYDEIDSAPEERARGITIQTAHVEFISKKRHYALVDCPGHVDYIKNMITGASQTDGLILVVSGVDGVMPQTREHVLLAKQVGVPSIIVCINKIDQADPELLELIEMEVRELLTKYDFPGDTVPIIRCSALKAINGDSDAKKGILELMDAIDDYIPQPTRVLDQPFLMPIEDVFSILGRGTVVTGRIERGVIKVGDEVEIVGLRSTQKTICTGVEMFKKELDQGQAGDNVGILLRGIKREDVERGQVLAKPGTITPHCSFEAEVYVLTKEEGGRHTPFFQNYRPQFYCRTTDVTGEIALLSGKEMVMPGDHATLSVNLVAPIAMDQGLSFAIREGGKTIGAGKVSKIIK.

The tr-type G domain maps to 9 to 204; the sequence is KPHCNIGTIG…AIDDYIPQPT (196 aa). The segment at 18-25 is G1; it reads GHVDHGKT. Residue 18-25 coordinates GTP; sequence GHVDHGKT. T25 provides a ligand contact to Mg(2+). The tract at residues 61–65 is G2; sequence GITIQ. The G3 stretch occupies residues 82-85; sequence DCPG. GTP is bound by residues 82–86 and 137–140; these read DCPGH and NKID. Residues 137–140 form a G4 region; it reads NKID. Residues 174-176 form a G5 region; the sequence is SAL.

This sequence belongs to the TRAFAC class translation factor GTPase superfamily. Classic translation factor GTPase family. EF-Tu/EF-1A subfamily. As to quaternary structure, monomer.

The protein resides in the cytoplasm. The catalysed reaction is GTP + H2O = GDP + phosphate + H(+). Functionally, GTP hydrolase that promotes the GTP-dependent binding of aminoacyl-tRNA to the A-site of ribosomes during protein biosynthesis. In Orientia tsutsugamushi (strain Boryong) (Rickettsia tsutsugamushi), this protein is Elongation factor Tu 1.